The primary structure comprises 291 residues: Taste receptor type 2 member 16 (291 aa).

A topological domain (extracellular) is located at residue Met1. Residues 2–22 traverse the membrane as a helical segment; sequence IPIQLTVFFMIIYVLESLTII. Residues 23 to 41 lie on the Cytoplasmic side of the membrane; that stretch reads VQSSLIVAVLGREWLQVRR. Residues 42–62 traverse the membrane as a helical segment; that stretch reads LMPVDMILISLGISRFCLQWA. Residues 63–84 are Extracellular-facing; it reads SMLNNFCSYFNLNYVLCNLTIT. The N-linked (GlcNAc...) asparagine glycan is linked to Asn80. A helical transmembrane segment spans residues 85 to 105; it reads WEFFNILTFWLNSLLTVFYCI. Topologically, residues 106 to 125 are cytoplasmic; that stretch reads KVSSFTHHIFLWLRWRILRL. A helical membrane pass occupies residues 126 to 146; the sequence is FPWILLGSLMITCVTIIPSAI. The Extracellular segment spans residues 147–182; that stretch reads GNYIQIQLLTMEHLPRNSTVTDKLENFHQYQFQAHT. Asn163 carries an N-linked (GlcNAc...) asparagine glycan. The helical transmembrane segment at 183 to 203 threads the bilayer; that stretch reads VALVIPFILFLASTIFLMASL. Over 204–228 the chain is Cytoplasmic; sequence TKQIQHHSTGHCNPSMKARFTALRS. A helical transmembrane segment spans residues 229–249; that stretch reads LAVLFIVFTSYFLTILITIIG. Residues 250-257 are Extracellular-facing; that stretch reads TLFDKRCW. Residues 258–278 form a helical membrane-spanning segment; it reads LWVWEAFVYAFILMHSTSLML. The Cytoplasmic portion of the chain corresponds to 279–291; sequence SSPTLKRILKGKC.

Belongs to the G-protein coupled receptor T2R family. In terms of assembly, interacts with RTP3 and RTP4. In terms of tissue distribution, expressed in a subset of gustducin-positive taste receptor cells of the tongue. Expressed in circumvallate papillae and testis.

It is found in the cell membrane. Functionally, gustducin-coupled receptor implicated in the perception of bitter compounds in the oral cavity and the gastrointestinal tract. Signals through PLCB2 and the calcium-regulated cation channel TRPM5. This Homo sapiens (Human) protein is Taste receptor type 2 member 16 (TAS2R16).